Consider the following 354-residue polypeptide: Uroporphyrinogen decarboxylase (354 aa).

Substrate-binding positions include 30 to 34, phenylalanine 49, aspartate 79, tyrosine 156, serine 211, and histidine 326; that span reads RQAGR.

This sequence belongs to the uroporphyrinogen decarboxylase family. In terms of assembly, homodimer.

The protein localises to the cytoplasm. It catalyses the reaction uroporphyrinogen III + 4 H(+) = coproporphyrinogen III + 4 CO2. Its pathway is porphyrin-containing compound metabolism; protoporphyrin-IX biosynthesis; coproporphyrinogen-III from 5-aminolevulinate: step 4/4. Functionally, catalyzes the decarboxylation of four acetate groups of uroporphyrinogen-III to yield coproporphyrinogen-III. The protein is Uroporphyrinogen decarboxylase of Salinibacter ruber (strain DSM 13855 / M31).